Reading from the N-terminus, the 373-residue chain is Beta sliding clamp homolog GriR (373 aa).

This sequence belongs to the beta sliding clamp family. Forms a ring-shaped head-to-tail homodimer around DNA which binds and tethers DNA polymerases and other proteins to the DNA. The DNA replisome complex has a single clamp-loading complex (3 tau and 1 each of delta, delta', psi and chi subunits) which binds 3 Pol III cores (1 core on the leading strand and 2 on the lagging strand) each with a beta sliding clamp dimer. Additional proteins in the replisome are other copies of gamma, psi and chi, Ssb, DNA helicase and RNA primase.

It is found in the cytoplasm. Its function is as follows. A homolog of the beta sliding clamp protein encoded within the biosynthetic cluster for griselimycin synthesis. Upon expression in S.coelicolor A3(2), which is susceptible to this antibiotic, confers resistance to griselimycin. The beta sliding clamp confers DNA tethering and processivity to DNA polymerases and other proteins. Acts as a clamp, forming a ring around DNA (a reaction catalyzed by the clamp-loading complex) which diffuses in an ATP-independent manner freely and bidirectionally along dsDNA. Initially characterized for its ability to contact the catalytic subunit of DNA polymerase III (Pol III), a complex, multichain enzyme responsible for most of the replicative synthesis in bacteria; Pol III exhibits 3'-5' exonuclease proofreading activity. The beta chain is required for initiation of replication as well as for processivity of DNA replication. The protein is Beta sliding clamp homolog GriR of Streptomyces muensis.